The primary structure comprises 441 residues: Zinc finger and BTB domain-containing protein 8A (441 aa).

The BTB domain maps to 24 to 92 (CDCSILVEGK…VYSGKLSLTG (69 aa)). Composition is skewed to polar residues over residues 146–170 (ERSS…SPDQ) and 178–197 (KSWS…QQPL). Residues 146–252 (ERSSFYSSGW…SEEQAQMNAE (107 aa)) form a disordered region. A phosphoserine mark is found at Ser161 and Ser167. Residues Lys178, Lys182, and Lys199 each participate in a glycyl lysine isopeptide (Lys-Gly) (interchain with G-Cter in SUMO2) cross-link. Positions 198-208 (TKHEQRKDSIK) are enriched in basic and acidic residues. A compositionally biased stretch (low complexity) spans 234-248 (SDSSSHASQSEEQAQ). C2H2-type zinc fingers lie at residues 282-304 (FKCP…LRCH) and 310-333 (YPCQ…RTIH). Lys437 is covalently cross-linked (Glycyl lysine isopeptide (Lys-Gly) (interchain with G-Cter in SUMO2)).

The protein localises to the nucleus. Functionally, may be involved in transcriptional regulation. The protein is Zinc finger and BTB domain-containing protein 8A (ZBTB8A) of Bos taurus (Bovine).